The following is a 640-amino-acid chain: 1-deoxy-D-xylulose-5-phosphate synthase (640 aa).

Thiamine diphosphate-binding positions include histidine 79 and 120 to 122 (GHS). Aspartate 151 lines the Mg(2+) pocket. Residues 152 to 153 (GA), asparagine 180, tyrosine 287, and glutamate 369 each bind thiamine diphosphate. Residue asparagine 180 coordinates Mg(2+).

This sequence belongs to the transketolase family. DXPS subfamily. Homodimer. It depends on Mg(2+) as a cofactor. Thiamine diphosphate serves as cofactor.

The catalysed reaction is D-glyceraldehyde 3-phosphate + pyruvate + H(+) = 1-deoxy-D-xylulose 5-phosphate + CO2. It functions in the pathway metabolic intermediate biosynthesis; 1-deoxy-D-xylulose 5-phosphate biosynthesis; 1-deoxy-D-xylulose 5-phosphate from D-glyceraldehyde 3-phosphate and pyruvate: step 1/1. Functionally, catalyzes the acyloin condensation reaction between C atoms 2 and 3 of pyruvate and glyceraldehyde 3-phosphate to yield 1-deoxy-D-xylulose-5-phosphate (DXP). The sequence is that of 1-deoxy-D-xylulose-5-phosphate synthase from Thioalkalivibrio sulfidiphilus (strain HL-EbGR7).